A 119-amino-acid chain; its full sequence is Class I hydrophobin 2 (119 aa).

The signal sequence occupies residues 1 to 22; sequence MFARISTIITTLFFAMLAAATA. Cystine bridges form between Cys36–Cys97, Cys45–Cys91, Cys46–Cys79, and Cys98–Cys112.

This sequence belongs to the fungal hydrophobin family. Self-assembles to form functional amyloid fibrils called rodlets. Self-assembly into fibrillar rodlets occurs spontaneously at hydrophobic:hydrophilic interfaces and the rodlets further associate laterally to form amphipathic monolayers.

It is found in the secreted. The protein localises to the cell wall. Aerial growth, conidiation, and dispersal of filamentous fungi in the environment rely upon a capability of their secreting small amphipathic proteins called hydrophobins (HPBs) with low sequence identity. Class I can self-assemble into an outermost layer of rodlet bundles on aerial cell surfaces, conferring cellular hydrophobicity that supports fungal growth, development and dispersal; whereas Class II form highly ordered films at water-air interfaces through intermolecular interactions but contribute nothing to the rodlet structure. Abh2 is a class I hydrophobin involved in the emergence of aerial hyphae and strands. The chain is Class I hydrophobin 2 from Agaricus bisporus (White button mushroom).